The following is a 473-amino-acid chain: MPMVLLECDKDIPERQKHIYLKAPNEDTREFLPIANAATIPGTLSERGCLLRRKLVIGGVLKDTIQMIHGPLGCAYDTWHTKRYPTDNGHFNMKYVWSTDMKESHVVFGGEKRLEQRMHEAFDEMPDIKRMIVYTTCPTALIGDDIKAVAKKVMKERPDVDVFTVECPGFSGVSQSKGHHVLNIGWINEKVETMEKEITSEYTMNFIGDFNIQGDTQLLQTYWDRLGIQVVAHFTGNGTYDDLRCMHQAQLNVVNCARSSGYIANELKKRYGIPRLDIDSWGFSYMAEGIRKICAFFGIEEKGERLIAEEYAKWKPKLDWYKERLQGKKMAIWTGGPRLWHWTKSVEDDLGIQVVAMSSKFGHEEDFEKVIARGKEGTYYIDDGNELEFFEIIDLVKPDVIFTGPRVGELVKKLHIPYVNGHGYHNGPYMGFEGFVNLARDTYNAVHNPLRHLAAVDIRDSSQTTPVIVRGAA.

3 residues coordinate [8Fe-7S] cluster: cysteine 49, cysteine 74, and cysteine 137. [7Fe-V-9S-C-homocitryl] cluster-binding residues include cysteine 256 and histidine 422.

It belongs to the NifD/NifK/NifE/NifN family. As to quaternary structure, hexamer of two alpha, two beta, and two delta chains. Requires [8Fe-7S] cluster as cofactor. [7Fe-V-9S-C-homocitryl] cluster is required as a cofactor.

It catalyses the reaction N2 + 8 reduced [2Fe-2S]-[ferredoxin] + 16 ATP + 16 H2O = H2 + 8 oxidized [2Fe-2S]-[ferredoxin] + 2 NH4(+) + 16 ADP + 16 phosphate + 6 H(+). Its function is as follows. This vanadium-iron protein is part of the nitrogenase complex that catalyzes the key enzymatic reactions in nitrogen fixation. This Azotobacter chroococcum mcd 1 protein is Nitrogenase vanadium-iron protein alpha chain (vnfD).